Consider the following 270-residue polypeptide: Small ribosomal subunit protein uS2 (270 aa).

Acidic residues predominate over residues 207–225 (EEPENTEEAAEEAATEEVV). The tract at residues 207–270 (EEPENTEEAA…SESAPAPVAA (64 aa)) is disordered. A compositionally biased stretch (low complexity) spans 226–258 (ETAAAEAAAATNADNWDVAPDAGAGAADWAATD).

Belongs to the universal ribosomal protein uS2 family. As to quaternary structure, component of the small ribosomal subunit. Mature ribosomes consist of a small (40S) and a large (60S) subunit. The 40S subunit contains about 33 different proteins and 1 molecule of RNA (18S). The 60S subunit contains about 49 different proteins and 3 molecules of RNA (25S, 5.8S and 5S). Interacts with RPS21.

The protein localises to the cytoplasm. Its function is as follows. Required for the assembly and/or stability of the 40S ribosomal subunit. Required for the processing of the 20S rRNA-precursor to mature 18S rRNA in a late step of the maturation of 40S ribosomal subunits. The sequence is that of Small ribosomal subunit protein uS2 from Yarrowia lipolytica (strain CLIB 122 / E 150) (Yeast).